Here is an 896-residue protein sequence, read N- to C-terminus: Lipoxygenase 2, chloroplastic (896 aa).

The transit peptide at 1-56 directs the protein to the chloroplast; the sequence is MYCRESLSSLQTLNVAKSLSSLFPKQSALINPISAGRRNNLPRPNLRRRCKVTASR. In terms of domain architecture, PLAT spans 79 to 199; sequence ITAQEEFLEG…VDPTKRIFFS (121 aa). The EIF4E2 binding stretch occupies residues 175–232; that stretch reads GSITFTCESWVAPKSVDPTKRIFFSDKSYLPSQTPEPLKKYRKEELETLQGKNREEVG. The region spanning 202 to 896 is the Lipoxygenase domain; that stretch reads SYLPSQTPEP…GMGVPYSISI (695 aa). Residues His-554, His-559, His-746, Asn-750, and Ile-896 each contribute to the Fe cation site.

Belongs to the lipoxygenase family. In terms of assembly, interacts with EIF4E2. The cofactor is Fe cation. In terms of tissue distribution, in leaves and inflorescences but not abundant in seeds, roots and stems.

The protein localises to the plastid. It localises to the chloroplast. Its subcellular location is the cytoplasm. The catalysed reaction is (9Z,12Z)-octadecadienoate + O2 = (13S)-hydroperoxy-(9Z,11E)-octadecadienoate. It carries out the reaction (9Z,12Z,15Z)-octadecatrienoate + O2 = (13S)-hydroperoxy-(9Z,11E,15Z)-octadecatrienoate. The protein operates within lipid metabolism; oxylipin biosynthesis. 13S-lipoxygenase that can use linolenic acid as substrates. Plant lipoxygenases may be involved in a number of diverse aspects of plant physiology including growth and development, pest resistance, and senescence or responses to wounding. Catalyzes the hydroperoxidation of lipids containing a cis,cis-1,4-pentadiene structure. Required for the wound-induced synthesis of jasmonic acid (JA) in leaves. This is Lipoxygenase 2, chloroplastic (LOX2) from Arabidopsis thaliana (Mouse-ear cress).